Consider the following 497-residue polypeptide: Phenylalanine--tRNA ligase alpha subunit (497 aa).

L-phenylalanine contacts are provided by residues Thr-329, 372-374, and Tyr-412; that span reads QIE. Position 414 (Glu-414) interacts with Mg(2+). Residue Phe-438 participates in L-phenylalanine binding.

The protein belongs to the class-II aminoacyl-tRNA synthetase family. Phe-tRNA synthetase alpha subunit type 2 subfamily. Heterotetramer; dimer of two heterodimers formed by alpha and beta subunits. Mg(2+) serves as cofactor.

It is found in the cytoplasm. The catalysed reaction is tRNA(Phe) + L-phenylalanine + ATP = L-phenylalanyl-tRNA(Phe) + AMP + diphosphate + H(+). This chain is Phenylalanine--tRNA ligase alpha subunit (farsa), found in Danio rerio (Zebrafish).